The sequence spans 338 residues: Mitochondrial glutathione transporter SLC25A40 (338 aa).

3 Solcar repeats span residues 13–131, 139–223, and 233–327; these read VTPL…LTAL, NESR…LKKW, and PTFM…GKSF. 6 consecutive transmembrane segments (helical) span residues 19 to 39, 103 to 123, 145 to 165, 199 to 220, 239 to 259, and 298 to 318; these read MFAS…FDVV, LWSG…IYFT, IVAG…LELI, WAPT…YEVL, FTSG…FDVV, and GLFT…AVMI.

This sequence belongs to the mitochondrial carrier (TC 2.A.29) family.

It localises to the mitochondrion inner membrane. It catalyses the reaction glutathione(in) = glutathione(out). Its function is as follows. Probable mitochondrial transporter required for glutathione import into mitochondria. Glutathione, which plays key roles in oxidative metabolism, is produced exclusively in the cytosol and is imported in many organelles. Mitochondrial glutathione is required for the activity and stability of proteins containing iron-sulfur clusters, as well as erythropoiesis. The protein is Mitochondrial glutathione transporter SLC25A40 of Bos taurus (Bovine).